We begin with the raw amino-acid sequence, 342 residues long: DNA-directed RNA polymerase subunit alpha (342 aa).

An alpha N-terminal domain (alpha-NTD) region spans residues 1–239 (MTTFLAKNWS…DQLQVFINFQ (239 aa)). Residues 254 to 342 (INPVLLKKVY…SLAKKHEDQY (89 aa)) form an alpha C-terminal domain (alpha-CTD) region.

Belongs to the RNA polymerase alpha chain family. As to quaternary structure, homodimer. The RNAP catalytic core consists of 2 alpha, 1 beta, 1 beta' and 1 omega subunit. When a sigma factor is associated with the core the holoenzyme is formed, which can initiate transcription.

It catalyses the reaction RNA(n) + a ribonucleoside 5'-triphosphate = RNA(n+1) + diphosphate. Functionally, DNA-dependent RNA polymerase catalyzes the transcription of DNA into RNA using the four ribonucleoside triphosphates as substrates. This chain is DNA-directed RNA polymerase subunit alpha, found in Orientia tsutsugamushi (strain Boryong) (Rickettsia tsutsugamushi).